The following is a 1191-amino-acid chain: Pyruvate-flavodoxin oxidoreductase (1191 aa).

4Fe-4S ferredoxin-type domains follow at residues 687-716 (QVCS…VKAV) and 744-773 (YVLA…TGAR). Residues C696, C699, C702, C706, C753, C756, C759, C763, C825, C828, C853, and C1085 each coordinate [4Fe-4S] cluster.

Belongs to the pyruvate:ferredoxin/flavodoxin oxidoreductase family. It depends on [4Fe-4S] cluster as a cofactor.

The enzyme catalyses oxidized [flavodoxin] + pyruvate + CoA + 2 H(+) = reduced [flavodoxin] + acetyl-CoA + CO2. Functionally, oxidoreductase required for the transfer of electrons from pyruvate to flavodoxin, which reduces nitrogenase. The sequence is that of Pyruvate-flavodoxin oxidoreductase (nifJ) from Rhodospirillum rubrum (strain ATCC 11170 / ATH 1.1.1 / DSM 467 / LMG 4362 / NCIMB 8255 / S1).